A 540-amino-acid chain; its full sequence is Probable ATP-dependent RNA helicase DDX28 (540 aa).

The short motif at Leu-3–Leu-18 is the Mitochondrial targeting signal element. The Q motif signature appears at Gly-126–Ser-156. The Helicase ATP-binding domain occupies Ile-159–Thr-351. Ala-172–Thr-179 serves as a coordination point for ATP. Positions Leu-180 to Leu-191 match the Nuclear export signal motif. Residues Asp-286 to Asp-289 carry the DEAD motif. In terms of domain architecture, Helicase C-terminal spans Lys-377–Leu-536. The short motif at Arg-520–Arg-523 is the Nuclear localization signal element.

Belongs to the DEAD box helicase family. As to quaternary structure, monomer. Found in a complex with GRSF1, DHX30, FASTKD2 and FASTKD5. Associates with the 16S mitochondrial rRNA (16S mt-rRNA) and with the mitochondrial ribosome large subunit (39S). Expressed in all tissues tested, including brain, placenta, lung, liver, skeletal muscle, kidney, pancreas, leukocytes, colon, small intestine, ovary and prostate.

Its subcellular location is the nucleus. The protein resides in the mitochondrion. It is found in the mitochondrion matrix. It localises to the mitochondrion nucleoid. It carries out the reaction ATP + H2O = ADP + phosphate + H(+). Functionally, plays an essential role in facilitating the proper assembly of the mitochondrial large ribosomal subunit and its helicase activity is essential for this function. May be involved in RNA processing or transport. Has RNA and Mg(2+)-dependent ATPase activity. The chain is Probable ATP-dependent RNA helicase DDX28 (DDX28) from Homo sapiens (Human).